The chain runs to 1529 residues: DNA (cytosine-5)-methyltransferase 1B (1529 aa).

2 disordered regions span residues M1 to C56 and D674 to R706. The span at Q21 to E35 shows a compositional bias: basic and acidic residues. The segment covering D674–E694 has biased composition (acidic residues). Residues S697–R706 show a composition bias toward polar residues. BAH domains follow at residues L741–P873 and I910–P1049. One can recognise an SAM-dependent MTase C5-type domain in the interval L1093–K1527. Residue C1198 is part of the active site.

Belongs to the class I-like SAM-binding methyltransferase superfamily. C5-methyltransferase family. As to expression, expressed in roots and inflorescences. Expressed in roots, panicles, anthers, pistils, endosperm and imbibed embryos. Expressed in tissues containing actively replicating and dividing cells, such as shoot and root meristems.

It localises to the nucleus. It catalyses the reaction a 2'-deoxycytidine in DNA + S-adenosyl-L-methionine = a 5-methyl-2'-deoxycytidine in DNA + S-adenosyl-L-homocysteine + H(+). In terms of biological role, major CG methylase that methylates chromatin CpG residues and maintains DNA methylation. Plays a major role in genomic imprinting, regulation of embryogenesis and seed viability. Maintains DNA methylation at the FIE1 gene locus in the embryo. In Oryza sativa subsp. japonica (Rice), this protein is DNA (cytosine-5)-methyltransferase 1B (MET1B).